The following is a 355-amino-acid chain: Uroporphyrinogen decarboxylase (355 aa).

Substrate-binding positions include Arg27–Arg31, Asp78, Tyr155, Ser210, and His328.

The protein belongs to the uroporphyrinogen decarboxylase family. As to quaternary structure, homodimer.

Its subcellular location is the cytoplasm. It catalyses the reaction uroporphyrinogen III + 4 H(+) = coproporphyrinogen III + 4 CO2. It functions in the pathway porphyrin-containing compound metabolism; protoporphyrin-IX biosynthesis; coproporphyrinogen-III from 5-aminolevulinate: step 4/4. In terms of biological role, catalyzes the decarboxylation of four acetate groups of uroporphyrinogen-III to yield coproporphyrinogen-III. The protein is Uroporphyrinogen decarboxylase of Pseudomonas aeruginosa (strain LESB58).